A 64-amino-acid polypeptide reads, in one-letter code: Large ribosomal subunit protein bL35 (64 aa).

Belongs to the bacterial ribosomal protein bL35 family.

The protein is Large ribosomal subunit protein bL35 of Shewanella baltica (strain OS223).